A 213-amino-acid chain; its full sequence is ATP phosphoribosyltransferase (213 aa).

This sequence belongs to the ATP phosphoribosyltransferase family. Short subfamily. As to quaternary structure, heteromultimer composed of HisG and HisZ subunits.

It is found in the cytoplasm. It carries out the reaction 1-(5-phospho-beta-D-ribosyl)-ATP + diphosphate = 5-phospho-alpha-D-ribose 1-diphosphate + ATP. Its pathway is amino-acid biosynthesis; L-histidine biosynthesis; L-histidine from 5-phospho-alpha-D-ribose 1-diphosphate: step 1/9. Catalyzes the condensation of ATP and 5-phosphoribose 1-diphosphate to form N'-(5'-phosphoribosyl)-ATP (PR-ATP). Has a crucial role in the pathway because the rate of histidine biosynthesis seems to be controlled primarily by regulation of HisG enzymatic activity. The chain is ATP phosphoribosyltransferase from Bacillus licheniformis (strain ATCC 14580 / DSM 13 / JCM 2505 / CCUG 7422 / NBRC 12200 / NCIMB 9375 / NCTC 10341 / NRRL NRS-1264 / Gibson 46).